The following is a 273-amino-acid chain: Protein BMH2 (273 aa).

Position 2 is an N-acetylserine (Ser-2). Positions 236–273 (DISESGQEDQQQQQQQQQQQQQQQQQAPAEQTQGEPTK) are disordered. Positions 245-261 (QQQQQQQQQQQQQQQQQ) are enriched in low complexity. Polar residues predominate over residues 262–273 (APAEQTQGEPTK).

This sequence belongs to the 14-3-3 family. Interacts with NTH1 (via N-terminus when phosphorylated by PKA); the interaction is direct and activates NTH1. Interacts with FIN1.

It is found in the cytoplasm. The protein localises to the nucleus. The protein is Protein BMH2 (BMH2) of Saccharomyces cerevisiae (strain ATCC 204508 / S288c) (Baker's yeast).